A 451-amino-acid polypeptide reads, in one-letter code: UDP-N-acetylmuramate--L-alanine ligase (451 aa).

Residue 110–116 (GTHGKTT) coordinates ATP.

The protein belongs to the MurCDEF family.

It localises to the cytoplasm. It carries out the reaction UDP-N-acetyl-alpha-D-muramate + L-alanine + ATP = UDP-N-acetyl-alpha-D-muramoyl-L-alanine + ADP + phosphate + H(+). It participates in cell wall biogenesis; peptidoglycan biosynthesis. Functionally, cell wall formation. The protein is UDP-N-acetylmuramate--L-alanine ligase of Francisella tularensis subsp. holarctica (strain FTNF002-00 / FTA).